The sequence spans 340 residues: Thylakoidal processing peptidase 1, chloroplastic (340 aa).

Residues 1-52 constitute a chloroplast transit peptide; the sequence is MAIRITFTYSTHVARNLVGTRVGPGGYCFESLVRPRFFSHKRDFDRSPRNRP. A helical transmembrane segment spans residues 155–175; the sequence is EDAKAAFTAVTVSILFRSALA. The Lumenal, thylakoid segment spans residues 176 to 340; the sequence is EPKSIPSTSM…AITRGPVAVS (165 aa). S184 is a catalytic residue.

It belongs to the peptidase S26 family.

The protein localises to the plastid. The protein resides in the chloroplast thylakoid membrane. It carries out the reaction Cleavage of hydrophobic, N-terminal signal or leader sequences from secreted and periplasmic proteins.. Its function is as follows. Cleaves the thylakoid-transfer domain from a chloroplast protein. The protein is Thylakoidal processing peptidase 1, chloroplastic (TPP1) of Arabidopsis thaliana (Mouse-ear cress).